Reading from the N-terminus, the 76-residue chain is ATP synthase subunit c (76 aa).

2 consecutive transmembrane segments (helical) span residues 12–32 (LGSI…GIIF) and 54–74 (ILGF…PFVY).

It belongs to the ATPase C chain family. As to quaternary structure, F-type ATPases have 2 components, F(1) - the catalytic core - and F(0) - the membrane proton channel. F(1) has five subunits: alpha(3), beta(3), gamma(1), delta(1), epsilon(1). F(0) has three main subunits: a(1), b(2) and c(10-14). The alpha and beta chains form an alternating ring which encloses part of the gamma chain. F(1) is attached to F(0) by a central stalk formed by the gamma and epsilon chains, while a peripheral stalk is formed by the delta and b chains.

The protein resides in the cell membrane. F(1)F(0) ATP synthase produces ATP from ADP in the presence of a proton or sodium gradient. F-type ATPases consist of two structural domains, F(1) containing the extramembraneous catalytic core and F(0) containing the membrane proton channel, linked together by a central stalk and a peripheral stalk. During catalysis, ATP synthesis in the catalytic domain of F(1) is coupled via a rotary mechanism of the central stalk subunits to proton translocation. In terms of biological role, key component of the F(0) channel; it plays a direct role in translocation across the membrane. A homomeric c-ring of between 10-14 subunits forms the central stalk rotor element with the F(1) delta and epsilon subunits. In Streptomyces coelicolor (strain ATCC BAA-471 / A3(2) / M145), this protein is ATP synthase subunit c.